Reading from the N-terminus, the 134-residue chain is Small ribosomal subunit protein uS11 (134 aa).

The disordered stretch occupies residues 114 to 134 (DVTPVPSDSTRRKGGRRGRRL). Basic residues predominate over residues 125 to 134 (RKGGRRGRRL).

This sequence belongs to the universal ribosomal protein uS11 family.

In Candida albicans (Yeast), this protein is Small ribosomal subunit protein uS11 (RPS14).